The primary structure comprises 305 residues: D-alanine--D-alanine ligase (305 aa).

The ATP-grasp domain maps to 105–300 (KMIWQAAGIN…FDELVVQILE (196 aa)). 131 to 186 (ADRLGLPLIIKPAREGSTLGLNKVDNEQDFRSAYQAAAEYDSLVLAEQFIQGIELT) is an ATP binding site. Aspartate 254, glutamate 267, and asparagine 269 together coordinate Mg(2+).

This sequence belongs to the D-alanine--D-alanine ligase family. The cofactor is Mg(2+). Mn(2+) is required as a cofactor.

Its subcellular location is the cytoplasm. It carries out the reaction 2 D-alanine + ATP = D-alanyl-D-alanine + ADP + phosphate + H(+). It participates in cell wall biogenesis; peptidoglycan biosynthesis. Functionally, cell wall formation. This chain is D-alanine--D-alanine ligase, found in Nitrosomonas europaea (strain ATCC 19718 / CIP 103999 / KCTC 2705 / NBRC 14298).